Reading from the N-terminus, the 383-residue chain is Oxysterol-binding protein-related protein 4B (383 aa).

The protein belongs to the OSBP family. Expressed in stems and flowers.

May be involved in the transport of sterols. This Arabidopsis thaliana (Mouse-ear cress) protein is Oxysterol-binding protein-related protein 4B (ORP4B).